The following is a 407-amino-acid chain: Transcriptional regulator ICP22 homolog (407 aa).

The disordered stretch occupies residues 34–268 (RKRRRKLKPQ…STQPGGVPKL (235 aa)). Acidic residues predominate over residues 81–241 (EREGEGGEEG…EEAEEEEEEA (161 aa)).

It belongs to the herpesviridae ICP22 family.

The protein is Transcriptional regulator ICP22 homolog (73) of Saimiriine herpesvirus 2 (strain 11) (SaHV-2).